The sequence spans 128 residues: MLPFYFLSVATNAAIGFILTVLDSQEESAHDCPFLYDATFSLVLALLSGIAAVCKCVNPIGAQLPVLGDLIPTLAGGTGCALFLHRYCVALSKPSPIPRTLVQYAKPLGLFSLAASILHLLFAPTLFL.

4 helical membrane-spanning segments follow: residues 2-22 (LPFYFLSVATNAAIGFILTVL), 34-54 (FLYDATFSLVLALLSGIAAVC), 64-84 (LPVLGDLIPTLAGGTGCALFL), and 108-128 (LGLFSLAASILHLLFAPTLFL).

It localises to the cell membrane. This is an uncharacterized protein from Treponema pallidum (strain Nichols).